The sequence spans 472 residues: 3-isopropylmalate dehydratase large subunit (472 aa).

[4Fe-4S] cluster is bound by residues Cys347, Cys407, and Cys410.

The protein belongs to the aconitase/IPM isomerase family. LeuC type 1 subfamily. In terms of assembly, heterodimer of LeuC and LeuD. The cofactor is [4Fe-4S] cluster.

The enzyme catalyses (2R,3S)-3-isopropylmalate = (2S)-2-isopropylmalate. The protein operates within amino-acid biosynthesis; L-leucine biosynthesis; L-leucine from 3-methyl-2-oxobutanoate: step 2/4. Functionally, catalyzes the isomerization between 2-isopropylmalate and 3-isopropylmalate, via the formation of 2-isopropylmaleate. This Bacillus velezensis (strain DSM 23117 / BGSC 10A6 / LMG 26770 / FZB42) (Bacillus amyloliquefaciens subsp. plantarum) protein is 3-isopropylmalate dehydratase large subunit.